The sequence spans 396 residues: Tryptophan synthase beta chain (396 aa).

Lys86 bears the N6-(pyridoxal phosphate)lysine mark.

The protein belongs to the TrpB family. In terms of assembly, tetramer of two alpha and two beta chains. Requires pyridoxal 5'-phosphate as cofactor.

The enzyme catalyses (1S,2R)-1-C-(indol-3-yl)glycerol 3-phosphate + L-serine = D-glyceraldehyde 3-phosphate + L-tryptophan + H2O. The protein operates within amino-acid biosynthesis; L-tryptophan biosynthesis; L-tryptophan from chorismate: step 5/5. Its function is as follows. The beta subunit is responsible for the synthesis of L-tryptophan from indole and L-serine. This Blochmanniella pennsylvanica (strain BPEN) protein is Tryptophan synthase beta chain.